The sequence spans 102 residues: Large ribosomal subunit protein bL21 (102 aa).

It belongs to the bacterial ribosomal protein bL21 family. Part of the 50S ribosomal subunit. Contacts protein L20.

This protein binds to 23S rRNA in the presence of protein L20. This Solidesulfovibrio magneticus (strain ATCC 700980 / DSM 13731 / RS-1) (Desulfovibrio magneticus) protein is Large ribosomal subunit protein bL21.